The following is a 209-amino-acid chain: Uracil phosphoribosyltransferase (209 aa).

5-phospho-alpha-D-ribose 1-diphosphate is bound by residues Arg79, Arg104, and 131-139 (DPMLATGGS). Uracil-binding positions include Ile194 and 199 to 201 (GDA). Asp200 contributes to the 5-phospho-alpha-D-ribose 1-diphosphate binding site.

This sequence belongs to the UPRTase family. Mg(2+) serves as cofactor.

The catalysed reaction is UMP + diphosphate = 5-phospho-alpha-D-ribose 1-diphosphate + uracil. The protein operates within pyrimidine metabolism; UMP biosynthesis via salvage pathway; UMP from uracil: step 1/1. With respect to regulation, allosterically activated by GTP. Catalyzes the conversion of uracil and 5-phospho-alpha-D-ribose 1-diphosphate (PRPP) to UMP and diphosphate. The chain is Uracil phosphoribosyltransferase from Clostridium beijerinckii (strain ATCC 51743 / NCIMB 8052) (Clostridium acetobutylicum).